The chain runs to 163 residues: Peptide methionine sulfoxide reductase MsrA (163 aa).

C10 is a catalytic residue.

Belongs to the MsrA Met sulfoxide reductase family.

The enzyme catalyses L-methionyl-[protein] + [thioredoxin]-disulfide + H2O = L-methionyl-(S)-S-oxide-[protein] + [thioredoxin]-dithiol. It carries out the reaction [thioredoxin]-disulfide + L-methionine + H2O = L-methionine (S)-S-oxide + [thioredoxin]-dithiol. Functionally, has an important function as a repair enzyme for proteins that have been inactivated by oxidation. Catalyzes the reversible oxidation-reduction of methionine sulfoxide in proteins to methionine. In Vesicomyosocius okutanii subsp. Calyptogena okutanii (strain HA), this protein is Peptide methionine sulfoxide reductase MsrA.